Reading from the N-terminus, the 192-residue chain is Large ribosomal subunit protein uL5 (192 aa).

Belongs to the universal ribosomal protein uL5 family. As to quaternary structure, part of the 50S ribosomal subunit; part of the 5S rRNA/L5/L18/L25 subcomplex. Contacts the 5S rRNA and the P site tRNA. Forms a bridge to the 30S subunit in the 70S ribosome.

This is one of the proteins that bind and probably mediate the attachment of the 5S RNA into the large ribosomal subunit, where it forms part of the central protuberance. In the 70S ribosome it contacts protein S13 of the 30S subunit (bridge B1b), connecting the 2 subunits; this bridge is implicated in subunit movement. Contacts the P site tRNA; the 5S rRNA and some of its associated proteins might help stabilize positioning of ribosome-bound tRNAs. This is Large ribosomal subunit protein uL5 from Mesorhizobium japonicum (strain LMG 29417 / CECT 9101 / MAFF 303099) (Mesorhizobium loti (strain MAFF 303099)).